The following is a 741-amino-acid chain: Phosphoribosylformylglycinamidine synthase subunit PurL (741 aa).

His-54 is an active-site residue. 2 residues coordinate ATP: Tyr-57 and Lys-98. Residue Glu-100 coordinates Mg(2+). Substrate is bound by residues 101–104 and Arg-123; that span reads SHNH. Residue His-102 is the Proton acceptor of the active site. Residue Asp-124 coordinates Mg(2+). Gln-251 is a binding site for substrate. Residue Asp-279 coordinates Mg(2+). Residue 323 to 325 coordinates substrate; it reads ESQ. ATP is bound by residues Asp-510 and Gly-547. Position 548 (Asn-548) interacts with Mg(2+). Ser-550 serves as a coordination point for substrate.

The protein belongs to the FGAMS family. Monomer. Part of the FGAM synthase complex composed of 1 PurL, 1 PurQ and 2 PurS subunits.

The protein resides in the cytoplasm. The enzyme catalyses N(2)-formyl-N(1)-(5-phospho-beta-D-ribosyl)glycinamide + L-glutamine + ATP + H2O = 2-formamido-N(1)-(5-O-phospho-beta-D-ribosyl)acetamidine + L-glutamate + ADP + phosphate + H(+). It participates in purine metabolism; IMP biosynthesis via de novo pathway; 5-amino-1-(5-phospho-D-ribosyl)imidazole from N(2)-formyl-N(1)-(5-phospho-D-ribosyl)glycinamide: step 1/2. Part of the phosphoribosylformylglycinamidine synthase complex involved in the purines biosynthetic pathway. Catalyzes the ATP-dependent conversion of formylglycinamide ribonucleotide (FGAR) and glutamine to yield formylglycinamidine ribonucleotide (FGAM) and glutamate. The FGAM synthase complex is composed of three subunits. PurQ produces an ammonia molecule by converting glutamine to glutamate. PurL transfers the ammonia molecule to FGAR to form FGAM in an ATP-dependent manner. PurS interacts with PurQ and PurL and is thought to assist in the transfer of the ammonia molecule from PurQ to PurL. This Picrophilus torridus (strain ATCC 700027 / DSM 9790 / JCM 10055 / NBRC 100828 / KAW 2/3) protein is Phosphoribosylformylglycinamidine synthase subunit PurL.